The primary structure comprises 276 residues: NADPH-dependent 7-cyano-7-deazaguanine reductase (276 aa).

83 to 85 (IES) is a substrate binding site. 85-86 (SK) serves as a coordination point for NADPH. Cys-184 (thioimide intermediate) is an active-site residue. The active-site Proton donor is Asp-191. 223-224 (HE) is a binding site for substrate. Residue 252–253 (RG) coordinates NADPH.

It belongs to the GTP cyclohydrolase I family. QueF type 2 subfamily. Homodimer.

The protein resides in the cytoplasm. It carries out the reaction 7-aminomethyl-7-carbaguanine + 2 NADP(+) = 7-cyano-7-deazaguanine + 2 NADPH + 3 H(+). It participates in tRNA modification; tRNA-queuosine biosynthesis. Catalyzes the NADPH-dependent reduction of 7-cyano-7-deazaguanine (preQ0) to 7-aminomethyl-7-deazaguanine (preQ1). The protein is NADPH-dependent 7-cyano-7-deazaguanine reductase of Pseudomonas entomophila (strain L48).